Here is a 563-residue protein sequence, read N- to C-terminus: Developmental regulatory protein wetA (563 aa).

Polar residues-rich tracts occupy residues 54–69 (EQSPIISTSKQQTHPS) and 160–175 (HKQSFSPSLTRPSQFQ). 6 disordered regions span residues 54-81 (EQSPIISTSKQQTHPSPQWAKDFWSLPP), 112-176 (ASST…QFQK), 272-318 (SNNS…PDLQ), 334-356 (PQRQPSYQQVVASPPPQQPIQNT), 430-494 (PQLH…SPKG), and 516-538 (GVAPSGSSKTKARREQEARDRRR). A compositionally biased stretch (low complexity) spans 272 to 305 (SNNSTVTSSPPSADDIFPSPHSSDPQSMSSWHSD). Over residues 430–441 (PQLHPQSRSPSL) the composition is skewed to polar residues.

The protein belongs to the wetA family.

Its function is as follows. BrlA, abaA and wetA are pivotal regulators of conidiophore development and conidium maturation. They act individually and together to regulate their own expression and that of numerous other sporulation-specific genes. This Aspergillus oryzae (strain ATCC 42149 / RIB 40) (Yellow koji mold) protein is Developmental regulatory protein wetA.